The following is a 358-amino-acid chain: Probable anti-sigma-M factor YhdL (358 aa).

The helical transmembrane segment at 74 to 96 threads the bilayer; the sequence is ISVLAVISTLMILPLCTLGSYLY.

The N-terminus of YhdL interacts with sigma-M. YhdL interacts specifically with YhdK.

Its subcellular location is the membrane. The polypeptide is Probable anti-sigma-M factor YhdL (yhdL) (Bacillus subtilis (strain 168)).